The following is a 140-amino-acid chain: Myelodysplastic syndrome 2 translocation-associated protein (140 aa).

In terms of tissue distribution, highly expressed in peripheral blood leukocytes, spleen, thymus, kidney, pancreas and lung.

In Homo sapiens (Human), this protein is Myelodysplastic syndrome 2 translocation-associated protein (MDS2).